Here is a 183-residue protein sequence, read N- to C-terminus: NADH-quinone oxidoreductase subunit A (183 aa).

The next 3 helical transmembrane spans lie at 11 to 31 (IIAF…VPLL), 63 to 83 (FYLV…LYAW), and 98 to 118 (MVIF…TGAL). Residues 160–183 (GHIPAQSSGRMKSKTSTAPSSKQE) are disordered. Positions 164–183 (AQSSGRMKSKTSTAPSSKQE) are enriched in polar residues.

Belongs to the complex I subunit 3 family. NDH-1 is composed of 14 different subunits. Subunits NuoA, H, J, K, L, M, N constitute the membrane sector of the complex.

The protein resides in the cell inner membrane. It carries out the reaction a quinone + NADH + 5 H(+)(in) = a quinol + NAD(+) + 4 H(+)(out). NDH-1 shuttles electrons from NADH, via FMN and iron-sulfur (Fe-S) centers, to quinones in the respiratory chain. The immediate electron acceptor for the enzyme in this species is believed to be ubiquinone. Couples the redox reaction to proton translocation (for every two electrons transferred, four hydrogen ions are translocated across the cytoplasmic membrane), and thus conserves the redox energy in a proton gradient. The chain is NADH-quinone oxidoreductase subunit A from Acinetobacter baylyi (strain ATCC 33305 / BD413 / ADP1).